A 122-amino-acid chain; its full sequence is UPF0231 protein VP2494 (122 aa).

This sequence belongs to the UPF0231 family.

This is UPF0231 protein VP2494 from Vibrio parahaemolyticus serotype O3:K6 (strain RIMD 2210633).